Here is a 263-residue protein sequence, read N- to C-terminus: H-2 class II histocompatibility antigen, A-U beta chain (263 aa).

The signal sequence occupies residues 1 to 27 (MALQIPSLLLLAAVVVLMVLSSPGTEG). The tract at residues 28-120 (GDSERHFVVQ…TEVPTSLRRL (93 aa)) is beta-1. Residues 28-224 (GDSERHFVVQ…RAQSESARSK (197 aa)) are Extracellular-facing. Disulfide bonds link Cys-42/Cys-104 and Cys-143/Cys-199. An N-linked (GlcNAc...) asparagine glycan is attached at Asn-46. A beta-2 region spans residues 121–214 (EQPNVVISLS…SLKSPITVEW (94 aa)). Residues 123–211 (PNVVISLSRT…EHPSLKSPIT (89 aa)) form the Ig-like C1-type domain. Residues 215 to 224 (RAQSESARSK) form a connecting peptide region. A helical membrane pass occupies residues 225 to 245 (MLSGIGGCVLGVIFLGLGLFI). The Cytoplasmic portion of the chain corresponds to 246–263 (RHRSQKGPRGPPPAGLLQ).

It belongs to the MHC class II family.

It localises to the membrane. The polypeptide is H-2 class II histocompatibility antigen, A-U beta chain (Mus musculus (Mouse)).